Consider the following 456-residue polypeptide: UDP-N-acetylmuramate--L-alanine ligase (456 aa).

An ATP-binding site is contributed by 112-118; that stretch reads GAHGKTS.

The protein belongs to the MurCDEF family.

Its subcellular location is the cytoplasm. The enzyme catalyses UDP-N-acetyl-alpha-D-muramate + L-alanine + ATP = UDP-N-acetyl-alpha-D-muramoyl-L-alanine + ADP + phosphate + H(+). It functions in the pathway cell wall biogenesis; peptidoglycan biosynthesis. In terms of biological role, cell wall formation. In Desulforapulum autotrophicum (strain ATCC 43914 / DSM 3382 / VKM B-1955 / HRM2) (Desulfobacterium autotrophicum), this protein is UDP-N-acetylmuramate--L-alanine ligase.